A 193-amino-acid chain; its full sequence is Ion-translocating oxidoreductase complex subunit A (193 aa).

Helical transmembrane passes span 5-25, 39-59, 72-92, 102-122, 134-154, and 171-191; these read ILLI…FLGL, IGMG…AYLV, LRTL…EMVI, LLGI…VALL, VIYG…FAAL, and SIAL…SGLV.

The protein belongs to the NqrDE/RnfAE family. In terms of assembly, the complex is composed of six subunits: RnfA, RnfB, RnfC, RnfD, RnfE and RnfG.

The protein localises to the cell inner membrane. In terms of biological role, part of a membrane-bound complex that couples electron transfer with translocation of ions across the membrane. The sequence is that of Ion-translocating oxidoreductase complex subunit A from Histophilus somni (strain 2336) (Haemophilus somnus).